The following is a 296-amino-acid chain: NH(3)-dependent NAD(+) synthetase (296 aa).

Position 30-37 (30-37 (GVSGGLDS)) interacts with ATP. D36 is a Mg(2+) binding site. R157 lines the deamido-NAD(+) pocket. Mg(2+) is bound at residue E182. Positions 190 and 197 each coordinate deamido-NAD(+). The ATP site is built by K206 and S228.

It belongs to the NAD synthetase family. In terms of assembly, homodimer.

It carries out the reaction deamido-NAD(+) + NH4(+) + ATP = AMP + diphosphate + NAD(+) + H(+). It participates in cofactor biosynthesis; NAD(+) biosynthesis; NAD(+) from deamido-NAD(+) (ammonia route): step 1/1. Catalyzes the ATP-dependent amidation of deamido-NAD to form NAD. Uses ammonia as a nitrogen source. The polypeptide is NH(3)-dependent NAD(+) synthetase (Coprothermobacter proteolyticus (strain ATCC 35245 / DSM 5265 / OCM 4 / BT)).